The chain runs to 343 residues: MAGGRPHLKRSFSIIPCFVFVESVLLGIVILLAYRLEFTDTFPVHTQGFFCYDSTYAKPYPGPEAASRVPPALVYALVTAGPTLTILLGELARAFFPAPPSAVPVIGESTIVSGACCRFSPPVRRLVRFLGVYSFGLFTTTIFANAGQVVTGNPTPHFLSVCRPNYTALGCLPPSPDRPGPDRFVTDQGACAGSPSLVAAARRAFPCKDAALCAYAVTYTAMYVTLVFRVKGSRLVKPSLCLALLCPAFLVGVVRVAEYRNHWSDVLAGFLTGAAIATFLVTCVVHNFQSRPPSGRRLSPWEDLGQAPTMDSPLEKNPRSAGRIRHRHGSPHPSRRTAPAVAT.

3 helical membrane-spanning segments follow: residues 12–32, 69–89, and 129–149; these read FSII…VILL, VPPA…ILLG, and FLGV…AGQV. Asn-165 carries an N-linked (GlcNAc...) asparagine glycan. A run of 3 helical transmembrane segments spans residues 210 to 230, 239 to 259, and 266 to 286; these read AALC…VFRV, SLCL…VAEY, and VLAG…CVVH. The disordered stretch occupies residues 290–343; it reads SRPPSGRRLSPWEDLGQAPTMDSPLEKNPRSAGRIRHRHGSPHPSRRTAPAVAT. Residues Ser-299 and Ser-312 each carry the phosphoserine modification. Residues 322 to 335 show a composition bias toward basic residues; it reads GRIRHRHGSPHPSR.

The protein belongs to the PA-phosphatase related phosphoesterase family.

The protein resides in the membrane. This Homo sapiens (Human) protein is Phospholipid phosphatase-related protein type 2.